Here is a 90-residue protein sequence, read N- to C-terminus: U7-theraphotoxin-Hhn1g (90 aa).

A signal peptide spans 1-19; the sequence is MKTAIFTVVLALAVFAVLS. Residues 20–50 constitute a propeptide that is removed on maturation; sequence FGWEANEKALSEEFTELIHEKEAASETEARE. Disulfide bonds link C51–C65, C58–C70, and C64–C81.

The protein belongs to the neurotoxin 10 (Hwtx-1) family. 13 (Hntx-13) subfamily. Expressed by the venom gland.

Its subcellular location is the secreted. Its function is as follows. Ion channel inhibitor. This Cyriopagopus hainanus (Chinese bird spider) protein is U7-theraphotoxin-Hhn1g.